We begin with the raw amino-acid sequence, 227 residues long: Cytochrome c oxidase subunit 2 (227 aa).

The Mitochondrial intermembrane portion of the chain corresponds to 1–14 (MAYPFQLGFQDATS). A helical transmembrane segment spans residues 15 to 45 (PIMEELLHFHDHTLMIVFLISSLVLYIITLM). Residues 46-59 (LTTKLTHTSTMDAQ) lie on the Mitochondrial matrix side of the membrane. Residues 60 to 87 (EVETVWTILPAIILILIALPSLRILYMM) traverse the membrane as a helical segment. At 88 to 227 (DEVNNPSLTV…FFEKWSASML (140 aa)) the chain is on the mitochondrial intermembrane side. 6 residues coordinate Cu cation: His-161, Cys-196, Glu-198, Cys-200, His-204, and Met-207. Position 198 (Glu-198) interacts with Mg(2+).

The protein belongs to the cytochrome c oxidase subunit 2 family. Component of the cytochrome c oxidase (complex IV, CIV), a multisubunit enzyme composed of 14 subunits. The complex is composed of a catalytic core of 3 subunits MT-CO1, MT-CO2 and MT-CO3, encoded in the mitochondrial DNA, and 11 supernumerary subunits COX4I, COX5A, COX5B, COX6A, COX6B, COX6C, COX7A, COX7B, COX7C, COX8 and NDUFA4, which are encoded in the nuclear genome. The complex exists as a monomer or a dimer and forms supercomplexes (SCs) in the inner mitochondrial membrane with NADH-ubiquinone oxidoreductase (complex I, CI) and ubiquinol-cytochrome c oxidoreductase (cytochrome b-c1 complex, complex III, CIII), resulting in different assemblies (supercomplex SCI(1)III(2)IV(1) and megacomplex MCI(2)III(2)IV(2)). Found in a complex with TMEM177, COA6, COX18, COX20, SCO1 and SCO2. Interacts with TMEM177 in a COX20-dependent manner. Interacts with COX20. Interacts with COX16. Requires Cu cation as cofactor.

It is found in the mitochondrion inner membrane. The enzyme catalyses 4 Fe(II)-[cytochrome c] + O2 + 8 H(+)(in) = 4 Fe(III)-[cytochrome c] + 2 H2O + 4 H(+)(out). Its function is as follows. Component of the cytochrome c oxidase, the last enzyme in the mitochondrial electron transport chain which drives oxidative phosphorylation. The respiratory chain contains 3 multisubunit complexes succinate dehydrogenase (complex II, CII), ubiquinol-cytochrome c oxidoreductase (cytochrome b-c1 complex, complex III, CIII) and cytochrome c oxidase (complex IV, CIV), that cooperate to transfer electrons derived from NADH and succinate to molecular oxygen, creating an electrochemical gradient over the inner membrane that drives transmembrane transport and the ATP synthase. Cytochrome c oxidase is the component of the respiratory chain that catalyzes the reduction of oxygen to water. Electrons originating from reduced cytochrome c in the intermembrane space (IMS) are transferred via the dinuclear copper A center (CU(A)) of subunit 2 and heme A of subunit 1 to the active site in subunit 1, a binuclear center (BNC) formed by heme A3 and copper B (CU(B)). The BNC reduces molecular oxygen to 2 water molecules using 4 electrons from cytochrome c in the IMS and 4 protons from the mitochondrial matrix. The protein is Cytochrome c oxidase subunit 2 (MT-CO2) of Balaenoptera musculus (Blue whale).